The chain runs to 212 residues: Pyridoxine/pyridoxamine 5'-phosphate oxidase (212 aa).

Residues 8–11 (RRTY) and Lys66 each bind substrate. FMN-binding positions include 61–66 (RIVLLK), 76–77 (FT), Arg82, Lys83, and Gln105. 3 residues coordinate substrate: Tyr123, Arg127, and Ser131. Residues 140-141 (QS) and Trp184 contribute to the FMN site. Substrate is bound at residue 190–192 (RLH). Arg194 contacts FMN.

The protein belongs to the pyridoxamine 5'-phosphate oxidase family. In terms of assembly, homodimer. The cofactor is FMN.

The enzyme catalyses pyridoxamine 5'-phosphate + O2 + H2O = pyridoxal 5'-phosphate + H2O2 + NH4(+). It catalyses the reaction pyridoxine 5'-phosphate + O2 = pyridoxal 5'-phosphate + H2O2. The protein operates within cofactor metabolism; pyridoxal 5'-phosphate salvage; pyridoxal 5'-phosphate from pyridoxamine 5'-phosphate: step 1/1. Its pathway is cofactor metabolism; pyridoxal 5'-phosphate salvage; pyridoxal 5'-phosphate from pyridoxine 5'-phosphate: step 1/1. Its function is as follows. Catalyzes the oxidation of either pyridoxine 5'-phosphate (PNP) or pyridoxamine 5'-phosphate (PMP) into pyridoxal 5'-phosphate (PLP). In Cupriavidus pinatubonensis (strain JMP 134 / LMG 1197) (Cupriavidus necator (strain JMP 134)), this protein is Pyridoxine/pyridoxamine 5'-phosphate oxidase.